A 1222-amino-acid polypeptide reads, in one-letter code: Chitin synthase 4 (1222 aa).

A disordered region spans residues 1–108 (MSLPERPGGI…NRIDKDHPNY (108 aa)). The segment covering 51-68 (LSANSFAETIPSPNNSFV) has biased composition (polar residues). The N-linked (GlcNAc...) asparagine glycan is linked to Asn-64. A compositionally biased stretch (basic and acidic residues) spans 94 to 107 (IRPERNRIDKDHPN). Asn-116 carries N-linked (GlcNAc...) asparagine glycosylation. The disordered stretch occupies residues 136-199 (TTDVSGSRSQ…KSTKKRSTPQ (64 aa)). The segment covering 137-154 (TDVSGSRSQTLDGVSDTS) has biased composition (polar residues). A compositionally biased stretch (basic residues) spans 176 to 196 (SAKRVSRHKSGKITKSTKKRS). 2 helical membrane-spanning segments follow: residues 204–224 (PPSF…DFML) and 242–262 (MGLI…TFGF). N-linked (GlcNAc...) asparagine glycans are attached at residues Asn-378 and Asn-418. The chain crosses the membrane as a helical span at residues 509-529 (YVFLALILSVVGSRFVLALIF). Residues 595–662 (RFSTVYGPDR…PPSDGPGPAG (68 aa)) form a disordered region. Residues 608–643 (NKRVPTTMASSGGSGSQLLHPNSMYRQGNDSRSSFL) are compositionally biased toward polar residues. 2 N-linked (GlcNAc...) asparagine glycosylation sites follow: Asn-636 and Asn-1031. 3 helical membrane-spanning segments follow: residues 1056-1076 (FIVF…AFTF), 1090-1110 (VIPL…IVIT), and 1116-1136 (YLVW…VLPV). The segment at 1201–1222 (GGGNSWSMPPGHQYHDDYYSDA) is disordered. Positions 1213-1222 (QYHDDYYSDA) are enriched in basic and acidic residues.

The protein belongs to the chitin synthase family. Class IV subfamily.

It is found in the cell membrane. It carries out the reaction [(1-&gt;4)-N-acetyl-beta-D-glucosaminyl](n) + UDP-N-acetyl-alpha-D-glucosamine = [(1-&gt;4)-N-acetyl-beta-D-glucosaminyl](n+1) + UDP + H(+). In terms of biological role, polymerizes chitin, a structural polymer of the cell wall and septum, by transferring the sugar moiety of UDP-GlcNAc to the non-reducing end of the growing chitin polymer. Plays a role in cell wall integrity and is involved in tolerance to hyperosmotic conditions. Required to successfully penetrate the host plants and thus plays a key role in pathogenicity. The protein is Chitin synthase 4 of Verticillium dahliae (strain VdLs.17 / ATCC MYA-4575 / FGSC 10137) (Verticillium wilt).